The primary structure comprises 387 residues: O-methyltransferase lepI (387 aa).

135–148 is a substrate binding site; the sequence is FENLWPVLMALPDF. Residues 175 to 195 are substrate binding; the sequence is CFHWLATQPTRIANFKVLLTD. Residues 227-228, Asp252, 275-276, and Arg291 each bind S-adenosyl-L-methionine; these read GG and NF.

This sequence belongs to the class I-like SAM-binding methyltransferase superfamily. Cation-independent O-methyltransferase family.

In terms of biological role, O-methyltransferase; part of the gene cluster 23 that mediates the biosynthesis of a family of 2-pyridones known as leporins. The hybrid PKS-NRPS synthetase lepA and the enoyl reductase lepG are responsible for fusion of phenylalanine with a hexaketide and subsequent release of the stable tetramic acid precursor, pre-leporin C. Because lepA lacks a designated enoylreductase (ER) domain, the required activity is provided the enoyl reductase lepG. It is possible that the dehydrogenase lepF also participates in production of pre-leporin C. Cytochrome P450 monooxygenase lepH is then required for the ring expansion step to yield leporin C. Leporin C is then presumably further oxidized by the N-hydroxylase lepD to form leporin B. LepI may possess a function in biosynthesis upstream of lepA. Leporin B is further oxidized in the presence of ferric ion to give the leporin B trimer-iron chelate, but whether or not this reaction is catalyzed by an enzyme in the pathway or by ferric ion is not determined yet. This chain is O-methyltransferase lepI, found in Aspergillus flavus (strain ATCC 200026 / FGSC A1120 / IAM 13836 / NRRL 3357 / JCM 12722 / SRRC 167).